Consider the following 641-residue polypeptide: XK-related protein 6 (641 aa).

Disordered regions lie at residues 20–47 (LDEAVGSGGEEDGEPGGGGCGGGGDGSE) and 84–120 (RSAAADGGDQPLQPPAAPGAGRQPPTPSAARPEPPPP). Positions 34-46 (PGGGGCGGGGDGS) are enriched in gly residues. Positions 107 to 120 (PPTPSAARPEPPPP) are enriched in pro residues. The next 7 membrane-spanning stretches (helical) occupy residues 130–150 (LWIVLALLVFFGDVGTDLWLA), 159–179 (YVYFGLTLFFVLVPSLLVQSL), 318–338 (TLPCVSSVTSLMSLAWVLASY), 372–392 (VISFALFASIFQLYFGIFVVV), 413–433 (WEEILFNMVVGIVYIFCWFNV), 442–462 (MFAYYTIVLTENAALTFLWYF), and 473–493 (AVPALCCVFISFVAGIAMMLL).

Belongs to the XK family.

It is found in the cell membrane. In Homo sapiens (Human), this protein is XK-related protein 6.